The sequence spans 1401 residues: DNA polymerase III PolC-type (1401 aa).

The region spanning 388–543 is the Exonuclease domain; it reads FVVFDIETTG…EDAKATAEIF (156 aa).

It belongs to the DNA polymerase type-C family. PolC subfamily.

The protein resides in the cytoplasm. It catalyses the reaction DNA(n) + a 2'-deoxyribonucleoside 5'-triphosphate = DNA(n+1) + diphosphate. Required for replicative DNA synthesis. This DNA polymerase also exhibits 3' to 5' exonuclease activity. In Caldanaerobacter subterraneus subsp. tengcongensis (strain DSM 15242 / JCM 11007 / NBRC 100824 / MB4) (Thermoanaerobacter tengcongensis), this protein is DNA polymerase III PolC-type.